The following is a 638-amino-acid chain: Phosphomethylpyrimidine synthase (638 aa).

Residues Asn243, Met272, Tyr301, His337, 357–359, 398–401, and Glu437 each bind substrate; these read SRG and DGLR. Residue His441 participates in Zn(2+) binding. A substrate-binding site is contributed by Tyr464. Position 505 (His505) interacts with Zn(2+). Positions 585, 588, and 593 each coordinate [4Fe-4S] cluster.

Belongs to the ThiC family. In terms of assembly, homodimer. Requires [4Fe-4S] cluster as cofactor.

It carries out the reaction 5-amino-1-(5-phospho-beta-D-ribosyl)imidazole + S-adenosyl-L-methionine = 4-amino-2-methyl-5-(phosphooxymethyl)pyrimidine + CO + 5'-deoxyadenosine + formate + L-methionine + 3 H(+). It functions in the pathway cofactor biosynthesis; thiamine diphosphate biosynthesis. Functionally, catalyzes the synthesis of the hydroxymethylpyrimidine phosphate (HMP-P) moiety of thiamine from aminoimidazole ribotide (AIR) in a radical S-adenosyl-L-methionine (SAM)-dependent reaction. The polypeptide is Phosphomethylpyrimidine synthase (Dechloromonas aromatica (strain RCB)).